A 184-amino-acid polypeptide reads, in one-letter code: Photosystem I assembly protein Ycf4 (184 aa).

2 helical membrane-spanning segments follow: residues 22–42 (FCWA…GISS) and 57–77 (ILFF…LFIS).

The protein belongs to the Ycf4 family.

It localises to the plastid. The protein resides in the chloroplast thylakoid membrane. Its function is as follows. Seems to be required for the assembly of the photosystem I complex. The sequence is that of Photosystem I assembly protein Ycf4 from Populus trichocarpa (Western balsam poplar).